The primary structure comprises 651 residues: PTS system N-acetylglucosamine-specific EIICBA component (651 aa).

The PTS EIIC type-1 domain maps to 1–371; sequence MNILGFFQRL…FNLKTPGRED (371 aa). The next 12 helical transmembrane spans lie at 16–36, 40–60, 70–90, 92–112, 132–152, 165–185, 192–212, 232–252, 264–284, 285–305, 308–328, and 339–359; these read LPIAVLPVAALLLRFGQPDLL, FIAQAGGAIFDNLALIFAIGV, GSAALAGAVGYFVMTKAMVTI, PEINMGVLAGIITGLVAGAVY, FVPIATGFFCLILAAIFGYVW, WIVSAGALGSGIFGFINRLLI, VLNTIAWFQIGEFTNAAGTVF, GFFPIMMFGLPGAALAMYLAA, LLSVAITAFLTGVTEPLEFLF, LFLAPLLYLLHAVLTGISLFI, ALGIHAGFSFSAGAIDYVLMY, and MLLVMGVVFFFVYFLLFSAVI. Residues 390–472 enclose the PTS EIIB type-1 domain; that stretch reads TQLATSYIAA…KKVVTRGPVA (83 aa). Cysteine 412 (phosphocysteine intermediate; for EIIB activity) is an active-site residue. At cysteine 412 the chain carries Phosphocysteine; by EIIA. In terms of domain architecture, PTS EIIA type-1 spans 519 to 623; that stretch reads DEAFASKAVG…SMISPVVCSN (105 aa). Zn(2+) contacts are provided by histidine 556 and histidine 571. The active-site Tele-phosphohistidine intermediate; for EIIA activity is the histidine 571. The residue at position 571 (histidine 571) is a Phosphohistidine; by HPr.

Zn(2+) is required as a cofactor.

It is found in the cell inner membrane. It catalyses the reaction N(pros)-phospho-L-histidyl-[protein] + N-acetyl-D-glucosamine(out) = N-acetyl-D-glucosamine 6-phosphate(in) + L-histidyl-[protein]. Its function is as follows. The phosphoenolpyruvate-dependent sugar phosphotransferase system (sugar PTS), a major carbohydrate active transport system, catalyzes the phosphorylation of incoming sugar substrates concomitantly with their translocation across the cell membrane. This system is involved in N-acetylglucosamine transport. This Klebsiella pneumoniae protein is PTS system N-acetylglucosamine-specific EIICBA component (nagE).